Consider the following 456-residue polypeptide: Divalent metal cation transporter MntH (456 aa).

11 helical membrane-spanning segments follow: residues 47 to 67 (ALSFFGPGYLVAVGYMDPGNW), 77 to 97 (FGYALLSVVLLSNLMAVLLQA), 123 to 143 (AWPLWLLAELAICATDLAEVI), 151 to 171 (LLFGIPLEIGVILTAVDVLLV), 184 to 204 (ALIITLLGVIALCFLTQIIMA), 227 to 247 (MLYIALGIIGATVMPHNLYLH), 276 to 296 (IALTFALVINASILILAAASF), 316 to 336 (PLLGSAIAPALFAIALLCCGL), 369 to 389 (FVAIVPAAIVTILYGSQGTTE), 392 to 412 (ILSQVVLSLQLPFAVIPLVIF), and 422 to 442 (LAAAPWVTFLAAITAAIIVVL).

Belongs to the NRAMP family.

Its subcellular location is the cell inner membrane. In terms of biological role, h(+)-stimulated, divalent metal cation uptake system. The sequence is that of Divalent metal cation transporter MntH from Brucella suis biovar 1 (strain 1330).